The sequence spans 321 residues: tRNA-dihydrouridine synthase B (321 aa).

FMN contacts are provided by residues 16–18 (PMA) and Gln-70. Cys-100 functions as the Proton donor in the catalytic mechanism. Residues Lys-139, 200–202 (NGD), and 224–225 (GR) contribute to the FMN site.

This sequence belongs to the Dus family. DusB subfamily. Requires FMN as cofactor.

The enzyme catalyses a 5,6-dihydrouridine in tRNA + NAD(+) = a uridine in tRNA + NADH + H(+). The catalysed reaction is a 5,6-dihydrouridine in tRNA + NADP(+) = a uridine in tRNA + NADPH + H(+). Its function is as follows. Catalyzes the synthesis of 5,6-dihydrouridine (D), a modified base found in the D-loop of most tRNAs, via the reduction of the C5-C6 double bond in target uridines. This Pectobacterium carotovorum (Erwinia carotovora) protein is tRNA-dihydrouridine synthase B.